Reading from the N-terminus, the 842-residue chain is ATP-binding cassette sub-family B member 6 (842 aa).

Residues 1-26 (MVTVGNYCEAEGPVGPAWMQDGLSPC) are Lumenal-facing. Positions 1–205 (MVTVGNYCEA…SGGLFVLGLW (205 aa)) are required for the lysosomal targeting. The segment at 1–236 (MVTVGNYCEA…RSQVRSAAQQ (236 aa)) is required for ATPase activity. Asparagine 6 is a glycosylation site (N-linked (GlcNAc...) asparagine). A disulfide bond links cysteine 8 and cysteine 26. Residues 27–47 (FFFTLVPSTRMALGTLALVLA) traverse the membrane as a helical segment. The Cytoplasmic portion of the chain corresponds to 48-72 (LPCRRRERPAGADSLSWGAGPRISP). Residues 73-93 (YVLQLLLATLQAALPLAGLAG) traverse the membrane as a helical segment. Residues 94–106 (RVGTARGAPLPSY) are Lumenal-facing. A helical membrane pass occupies residues 107–127 (LLLASVLESLAGACGLWLLVV). The Cytoplasmic segment spans residues 128-147 (ERSQARQRLAMGIWIKFRHS). A helical membrane pass occupies residues 148–168 (PGLLLLWTVAFAAENLALVSW). The Lumenal segment spans residues 169 to 185 (NSPQWWWARADLGQQVQ). Residues 186–206 (FSLWVLRYVVSGGLFVLGLWA) traverse the membrane as a helical segment. Residues 207-263 (PGLRPQSYTLQVHEEDQDVERSQVRSAAQQSTWRDFGRKLRLLSGYLWPRGSPALQL) lie on the Cytoplasmic side of the membrane. Residues 264 to 284 (VVLICLGLMGLERALNVLVPI) traverse the membrane as a helical segment. Residues 265–556 (VLICLGLMGL…FGTYYRMIQT (292 aa)) enclose the ABC transmembrane type-1 domain. Residues 285–291 (FYRNIVN) lie on the Lumenal side of the membrane. Residues 292–312 (LLTEKAPWNSLAWTVTSYVFL) form a helical membrane-spanning segment. The Cytoplasmic portion of the chain corresponds to 313-375 (KFLQGGGTGS…TGEVLRIADR (63 aa)). A helical membrane pass occupies residues 376 to 396 (GTSSVTGLLSYLVFNVIPTLA). Residue aspartate 397 is a topological domain, lumenal. Residues 398 to 418 (IIIGIIYFSMFFNAWFGLIVF) traverse the membrane as a helical segment. Residues 419–499 (LCMSLYLTLT…SSASLVLLNQ (81 aa)) are Cytoplasmic-facing. A helical membrane pass occupies residues 500 to 520 (TQNLVIGLGLLAGSLLCAYFV). The Lumenal segment spans residues 521-529 (TEQKLQVGD). A helical membrane pass occupies residues 530–550 (YVLFGTYIIQLYMPLNWFGTY). The Cytoplasmic segment spans residues 551 to 842 (YRMIQTNFID…EDTKPQTMER (292 aa)). The ABC transporter domain maps to 590 to 824 (IEFENVHFSY…GGVYADMWQL (235 aa)). Residues tyrosine 599 and 623–634 (GPSGAGKSTILR) contribute to the ATP site.

This sequence belongs to the ABC transporter superfamily. ABCB family. Heavy Metal importer (TC 3.A.1.210) subfamily. In terms of assembly, homodimer. N-glycosylated. Widely expressed. High expression is detected in the retinal epithelium. Expressed in mature erythrocytes.

Its subcellular location is the cell membrane. It localises to the mitochondrion outer membrane. It is found in the endoplasmic reticulum membrane. The protein resides in the golgi apparatus membrane. The protein localises to the endosome membrane. Its subcellular location is the lysosome membrane. It localises to the late endosome membrane. It is found in the early endosome membrane. The protein resides in the secreted. The protein localises to the extracellular exosome. Its subcellular location is the mitochondrion. It localises to the endosome. It is found in the multivesicular body membrane. The protein resides in the melanosome membrane. The enzyme catalyses heme b(in) + ATP + H2O = heme b(out) + ADP + phosphate + H(+). The catalysed reaction is coproporphyrin III(in) + ATP + H2O = coproporphyrin III(out) + ADP + phosphate + H(+). It carries out the reaction pheophorbide a(in) + ATP + H2O = pheophorbide a(out) + ADP + phosphate + H(+). It catalyses the reaction coproporphyrinogen III(in) + ATP + H2O = coproporphyrinogen III(out) + ADP + phosphate + H(+). The enzyme catalyses protoporphyrin IX(in) + ATP + H2O = protoporphyrin IX(out) + ADP + phosphate + H(+). The catalysed reaction is coproporphyrin I(in) + ATP + H2O = coproporphyrin I(out) + ADP + phosphate + H(+). It carries out the reaction uroporphyrin I(in) + ATP + H2O = uroporphyrin I(out) + ADP + phosphate + H(+). It catalyses the reaction uroporphyrin III(in) + ATP + H2O = uroporphyrin III(out) + ADP + phosphate + H(+). ATPase activity is inhibited by MgATP with an IC(50) of 1.03 mM and up-regulated by coporphyrin III&gt; hemin &gt; protoporphyrin IX. ATPase activity for hemin is up-regulated by glutathione. The ATPase activity is impaired by increasing copper concentrations (0-300 uM). The ATPase activity is stimulated in presence of glutathione for increasing copper concentrations (0-300 uM). ATP-dependent transporter that catalyzes the transport of a broad-spectrum of porphyrins from the cytoplasm to the extracellular space through the plasma membrane or into the vesicle lumen. May also function as an ATP-dependent importer of porphyrins from the cytoplasm into the mitochondria, in turn may participate in the de novo heme biosynthesis regulation and in the coordination of heme and iron homeostasis during phenylhydrazine stress. May also play a key role in the early steps of melanogenesis producing PMEL amyloid fibrils. In vitro, it confers to cells a resistance to toxic metal such as arsenic and cadmium and against chemotherapeutics agent such as 5-fluorouracil, SN-38 and vincristin. In addition may play a role in the transition metal homeostasis. This chain is ATP-binding cassette sub-family B member 6, found in Homo sapiens (Human).